A 365-amino-acid chain; its full sequence is Deoxyguanosinetriphosphate triphosphohydrolase-like protein (365 aa).

The region spanning 52–187 is the HD domain; sequence RLTHSIEVSQ…VDHADEIAYV (136 aa).

It belongs to the dGTPase family. Type 2 subfamily.

The sequence is that of Deoxyguanosinetriphosphate triphosphohydrolase-like protein from Wolinella succinogenes (strain ATCC 29543 / DSM 1740 / CCUG 13145 / JCM 31913 / LMG 7466 / NCTC 11488 / FDC 602W) (Vibrio succinogenes).